A 65-amino-acid chain; its full sequence is Large ribosomal subunit protein bL33c (65 aa).

This sequence belongs to the bacterial ribosomal protein bL33 family.

It is found in the plastid. Its subcellular location is the chloroplast. The sequence is that of Large ribosomal subunit protein bL33c from Staurastrum punctulatum (Green alga).